Consider the following 447-residue polypeptide: Phosphatidylinositol N-acetylglucosaminyltransferase subunit A (447 aa).

Residues 1–387 are Cytoplasmic-facing; it reads MAEPPKLRVL…NRSLLERLMR (387 aa). A helical membrane pass occupies residues 388-408; sequence FLSCGAWAGKLFCMVMILDYL. The Lumenal segment spans residues 409 to 447; it reads LWRLLQLLQPDEDIEEAPDICLCHHRGVEVSEGLRKKIK.

This sequence belongs to the glycosyltransferase group 1 family. Glycosyltransferase 4 subfamily. Expressed in roots, stems, leaves, flowers and pollen grains.

The protein resides in the endoplasmic reticulum membrane. The catalysed reaction is a 1,2-diacyl-sn-glycero-3-phospho-(1D-myo-inositol) + UDP-N-acetyl-alpha-D-glucosamine = a 6-(N-acetyl-alpha-D-glucosaminyl)-1-(1,2-diacyl-sn-glycero-3-phospho)-1D-myo-inositol + UDP + H(+). It functions in the pathway glycolipid biosynthesis; glycosylphosphatidylinositol-anchor biosynthesis. In terms of biological role, necessary for the synthesis of N-acetylglucosaminyl-phosphatidylinositol, the very early intermediate in GPI-anchor biosynthesis. Required for pollen germination and pollen tube growth. The sequence is that of Phosphatidylinositol N-acetylglucosaminyltransferase subunit A from Arabidopsis thaliana (Mouse-ear cress).